Reading from the N-terminus, the 201-residue chain is Putative manganese efflux pump MntP 2 (201 aa).

The next 6 membrane-spanning stretches (helical) occupy residues 3-23 (LISV…VSIT), 39-59 (IGLF…SIGI), 65-85 (IAAL…GKMI), 116-136 (LILL…SFAF), 141-161 (IINT…IGVM), and 176-196 (ILGG…HTNI).

It belongs to the MntP (TC 9.B.29) family.

It is found in the cell membrane. Probably functions as a manganese efflux pump. This is Putative manganese efflux pump MntP 2 from Clostridium botulinum (strain Langeland / NCTC 10281 / Type F).